The sequence spans 154 residues: Transcription antitermination protein NusB (154 aa).

It belongs to the NusB family.

Functionally, involved in transcription antitermination. Required for transcription of ribosomal RNA (rRNA) genes. Binds specifically to the boxA antiterminator sequence of the ribosomal RNA (rrn) operons. This chain is Transcription antitermination protein NusB, found in Hyphomonas neptunium (strain ATCC 15444).